The primary structure comprises 321 residues: Lipoyl synthase (321 aa).

[4Fe-4S] cluster contacts are provided by cysteine 68, cysteine 73, cysteine 79, cysteine 94, cysteine 98, cysteine 101, and serine 308. The region spanning 80 to 297 (FNHGTATFMI…KQEALAMGFT (218 aa)) is the Radical SAM core domain.

The protein belongs to the radical SAM superfamily. Lipoyl synthase family. It depends on [4Fe-4S] cluster as a cofactor.

It is found in the cytoplasm. The catalysed reaction is [[Fe-S] cluster scaffold protein carrying a second [4Fe-4S](2+) cluster] + N(6)-octanoyl-L-lysyl-[protein] + 2 oxidized [2Fe-2S]-[ferredoxin] + 2 S-adenosyl-L-methionine + 4 H(+) = [[Fe-S] cluster scaffold protein] + N(6)-[(R)-dihydrolipoyl]-L-lysyl-[protein] + 4 Fe(3+) + 2 hydrogen sulfide + 2 5'-deoxyadenosine + 2 L-methionine + 2 reduced [2Fe-2S]-[ferredoxin]. It functions in the pathway protein modification; protein lipoylation via endogenous pathway; protein N(6)-(lipoyl)lysine from octanoyl-[acyl-carrier-protein]: step 2/2. In terms of biological role, catalyzes the radical-mediated insertion of two sulfur atoms into the C-6 and C-8 positions of the octanoyl moiety bound to the lipoyl domains of lipoate-dependent enzymes, thereby converting the octanoylated domains into lipoylated derivatives. This Sodalis glossinidius (strain morsitans) protein is Lipoyl synthase.